A 780-amino-acid chain; its full sequence is Zinc finger protein GLIS3 (780 aa).

Composition is skewed to polar residues over residues 80 to 92 (PSLS…QNGT) and 106 to 115 (VSGNSVSNSL). Disordered stretches follow at residues 80-148 (PSLS…KKRA) and 290-315 (PSAL…HLHH). The span at 135–148 (SATRAHSTRSKKRA) shows a compositional bias: basic residues. Pro residues predominate over residues 293-308 (LPLPLPPPQGPPPPYH). The C2H2-type 1 zinc finger occupies 345 to 370 (HCCRWIDCSALYDQQEELVRHIEKVH). The C2H2-type 2; atypical zinc finger occupies 379 to 406 (FTCFWTGCPRRYKPFNARYKLLIHMRVH). 3 C2H2-type zinc fingers span residues 412–436 (NKCT…LRSH), 442–466 (YLCQ…QRTH), and 472–496 (YACQ…VKAH). Disordered regions lie at residues 485–512 (DPSS…SSTE) and 527–670 (LQPA…QPNG). A Bipartite nuclear localization signal motif is present at residues 490-506 (RKHVKAHSSREQQARKK). The segment covering 497–512 (SSREQQARKKLRSSTE) has biased composition (basic and acidic residues). Over residues 567-577 (HSTRSGTAAGA) the composition is skewed to low complexity. Residues 593-605 (VQGSPHNPSSQLP) are compositionally biased toward polar residues.

Belongs to the GLI C2H2-type zinc-finger protein family. In the embryo, expressed at high levels in the kidney and testis. In the adult, expressed at high levels in the kidney and uterus and at lower levels in the brain, lung, skeletal muscle and pancreas.

It localises to the nucleus. In terms of biological role, acts both as a repressor and activator of transcription. Binds to the consensus sequence 5'-GACCACCCAC-3'. This Mus musculus (Mouse) protein is Zinc finger protein GLIS3.